A 154-amino-acid chain; its full sequence is Putative pre-16S rRNA nuclease (154 aa).

The protein belongs to the YqgF nuclease family.

The protein localises to the cytoplasm. Functionally, could be a nuclease involved in processing of the 5'-end of pre-16S rRNA. This Rickettsia canadensis (strain McKiel) protein is Putative pre-16S rRNA nuclease.